The chain runs to 372 residues: Glutamate 5-kinase (372 aa).

Lys6 provides a ligand contact to ATP. Residues Ser46, Asp133, and Asn145 each coordinate substrate. ATP-binding positions include 165 to 166 (TD) and 207 to 213 (TGGMYTK). In terms of domain architecture, PUA spans 272-350 (SGRLFIDEGA…HEIEKILGYK (79 aa)).

The protein belongs to the glutamate 5-kinase family.

It localises to the cytoplasm. The catalysed reaction is L-glutamate + ATP = L-glutamyl 5-phosphate + ADP. It functions in the pathway amino-acid biosynthesis; L-proline biosynthesis; L-glutamate 5-semialdehyde from L-glutamate: step 1/2. Its function is as follows. Catalyzes the transfer of a phosphate group to glutamate to form L-glutamate 5-phosphate. This Thermoanaerobacter pseudethanolicus (strain ATCC 33223 / 39E) (Clostridium thermohydrosulfuricum) protein is Glutamate 5-kinase.